A 183-amino-acid chain; its full sequence is Glutathione-regulated potassium-efflux system ancillary protein KefG (183 aa).

This sequence belongs to the NAD(P)H dehydrogenase (quinone) family. KefG subfamily. As to quaternary structure, interacts with KefB.

Its subcellular location is the cell inner membrane. It catalyses the reaction a quinone + NADH + H(+) = a quinol + NAD(+). The catalysed reaction is a quinone + NADPH + H(+) = a quinol + NADP(+). Functionally, regulatory subunit of a potassium efflux system that confers protection against electrophiles. Required for full activity of KefB. This Serratia proteamaculans (strain 568) protein is Glutathione-regulated potassium-efflux system ancillary protein KefG.